The primary structure comprises 218 residues: 3,4-dihydroxy-2-butanone 4-phosphate synthase (218 aa).

Residues 38–39 (RE), D43, 151–155 (RRGHT), and E175 contribute to the D-ribulose 5-phosphate site. E39 serves as a coordination point for Mg(2+). The segment at 125-151 (PHAKPEDLARPGHVFPLRARPGGVMTR) is disordered. H154 is a Mg(2+) binding site.

It belongs to the DHBP synthase family. Homodimer. It depends on Mg(2+) as a cofactor. Mn(2+) serves as cofactor.

It catalyses the reaction D-ribulose 5-phosphate = (2S)-2-hydroxy-3-oxobutyl phosphate + formate + H(+). Its pathway is cofactor biosynthesis; riboflavin biosynthesis; 2-hydroxy-3-oxobutyl phosphate from D-ribulose 5-phosphate: step 1/1. Its function is as follows. Catalyzes the conversion of D-ribulose 5-phosphate to formate and 3,4-dihydroxy-2-butanone 4-phosphate. The sequence is that of 3,4-dihydroxy-2-butanone 4-phosphate synthase from Vibrio parahaemolyticus serotype O3:K6 (strain RIMD 2210633).